A 503-amino-acid polypeptide reads, in one-letter code: ATP synthase subunit beta (503 aa).

ATP is bound at residue 157 to 164 (GGAGVGKT).

The protein belongs to the ATPase alpha/beta chains family. In terms of assembly, F-type ATPases have 2 components, CF(1) - the catalytic core - and CF(0) - the membrane proton channel. CF(1) has five subunits: alpha(3), beta(3), gamma(1), delta(1), epsilon(1). CF(0) has three main subunits: a(1), b(2) and c(9-12). The alpha and beta chains form an alternating ring which encloses part of the gamma chain. CF(1) is attached to CF(0) by a central stalk formed by the gamma and epsilon chains, while a peripheral stalk is formed by the delta and b chains.

The protein localises to the cell membrane. It catalyses the reaction ATP + H2O + 4 H(+)(in) = ADP + phosphate + 5 H(+)(out). Functionally, produces ATP from ADP in the presence of a proton gradient across the membrane. The catalytic sites are hosted primarily by the beta subunits. The polypeptide is ATP synthase subunit beta (Christiangramia forsetii (strain DSM 17595 / CGMCC 1.15422 / KT0803) (Gramella forsetii)).